The chain runs to 450 residues: TNF receptor-associated factor family protein DDB_G0273433/DDB_G0273509 (450 aa).

Residues 26 to 73 form an RING-type; degenerate zinc finger; it reads CQICFNSVIDFKKETLSFDVLQCRNGHISCHECWNRQLSIKQECPSCK. TRAF-type zinc fingers lie at residues 129–185 and 186–243; these read HHLK…KKLN and KHIE…SQLS. Residues 257–297 adopt a coiled-coil conformation; sequence QNVMDLHKLQLDECNQDYRKLEKQNRDLEKRLFYLESTVNS. The 121-residue stretch at 319 to 439 folds into the MATH domain; the sequence is VYKGKWVINN…NNSLTISISI (121 aa).

It belongs to the TNF receptor-associated factor family. A subfamily.

The protein localises to the cytoplasm. Probable adapter protein and signal transducer that links members of the tumor necrosis factor receptor family to different signaling pathways by association with the receptor cytoplasmic domain and kinases. The chain is TNF receptor-associated factor family protein DDB_G0273433/DDB_G0273509 from Dictyostelium discoideum (Social amoeba).